Reading from the N-terminus, the 481-residue chain is MARTGAEYIEALKTRPPNLWYKGEKVEDPTTHPVFRGIVRTMAALYDLQHDPRYREVLTYEEEGKRHGMSFLIPKTKEDLKRRGQAYKLWADQNLGMMGRSPDYLNAVVMAYAASADYFGEFAENVRNYYRYLRDQDLATTHALTNPQVNRARPPSGQPDPYIPVGVVKQTEKGIVVRGARMTATFPLADEVLIFPSTLLQAGSEKYALAFALPTSTPGLHFVCREALVGGDSPFDHPLSSRVEEMDCLVIFDDVLVPWERVFILGNVELCNNAYAATGALNHMAHQVVALKTAKTEAFLGVAALMAEGIGADVYGHVQEKIAEIIVYLEAMRAFWTRAEEEAKENAYGLLVPDRGALDGARNLYPRLYPRIREILEQIGASGLITLPSEKDFKGPLGPFLEKFLQGAALEAKERVALFRLAWDMTLSGFGARQELYERFFFGDPVRMYQTLYNVYNKEPYKERIRAFLKESLKVFEEVQA.

Substrate-binding positions include 100-104 (RSPDY) and histidine 142. FAD-binding positions include 142–144 (HAL), 148–151 (QVNR), and threonine 185. Residue 197 to 198 (ST) participates in substrate binding. An FAD-binding site is contributed by 444-447 (DPVR).

The protein belongs to the FADH(2)-utilizing monooxygenase family. As to quaternary structure, homotetramer consisting of a dimer of dimers. 4-HPA 3-monooxygenase consists of a reductase component HpaC and an oxygenase component HpaB.

The catalysed reaction is 4-hydroxyphenylacetate + FADH2 + O2 = 3,4-dihydroxyphenylacetate + FAD + H2O + H(+). It functions in the pathway aromatic compound metabolism; 4-hydroxyphenylacetate degradation; pyruvate and succinate semialdehyde from 4-hydroxyphenylacetate: step 1/7. Its function is as follows. Utilizes FADH(2) supplied by HpaC, to catalyze the hydroxylation of 4-hydroxyphenylacetic acid, leading to the production of 3,4-dihydroxyphenylacetic acid (DHPA). This Thermus thermophilus (strain ATCC 27634 / DSM 579 / HB8) protein is 4-hydroxyphenylacetate 3-monooxygenase oxygenase component.